Consider the following 99-residue polypeptide: Aspartyl/glutamyl-tRNA(Asn/Gln) amidotransferase subunit C (99 aa).

Belongs to the GatC family. Heterotrimer of A, B and C subunits.

The catalysed reaction is L-glutamyl-tRNA(Gln) + L-glutamine + ATP + H2O = L-glutaminyl-tRNA(Gln) + L-glutamate + ADP + phosphate + H(+). It carries out the reaction L-aspartyl-tRNA(Asn) + L-glutamine + ATP + H2O = L-asparaginyl-tRNA(Asn) + L-glutamate + ADP + phosphate + 2 H(+). Its function is as follows. Allows the formation of correctly charged Asn-tRNA(Asn) or Gln-tRNA(Gln) through the transamidation of misacylated Asp-tRNA(Asn) or Glu-tRNA(Gln) in organisms which lack either or both of asparaginyl-tRNA or glutaminyl-tRNA synthetases. The reaction takes place in the presence of glutamine and ATP through an activated phospho-Asp-tRNA(Asn) or phospho-Glu-tRNA(Gln). This is Aspartyl/glutamyl-tRNA(Asn/Gln) amidotransferase subunit C from Burkholderia mallei (strain NCTC 10247).